A 626-amino-acid chain; its full sequence is Lysine--tRNA ligase, cytoplasmic (626 aa).

An N-acetylmethionine modification is found at Met-1. Composition is skewed to polar residues over residues 1–11 and 18–27; these read MEGAADQTTKA and DSSTTLNAAE. The interval 1-84 is disordered; the sequence is MEGAADQTTK…QKAVAADDEE (84 aa). Residues 37–69 are a coiled coil; sequence RSKNALKKEQKMKQKEEEKRRKDEEKAEKAKQA. A compositionally biased stretch (basic and acidic residues) spans 42 to 67; sequence LKKEQKMKQKEEEKRRKDEEKAEKAK. Residues 69-78 show a composition bias toward low complexity; sequence APKASSQKAV. Residues 141-217 constitute a DNA-binding region (OB); it reads SLAGRIMSKR…RGELSIFPRS (77 aa). Substrate is bound by residues Gly-313 and Glu-337. ATP-binding positions include 359-361 and 367-368; these read RNE and HN. Glu-375 and Tyr-377 together coordinate substrate. Residues Glu-521 and Glu-528 each contribute to the Ca(2+) site. 528 to 529 is an ATP binding site; that stretch reads EL. Residues Asn-531 and Glu-535 each contribute to the substrate site. ATP is bound at residue 584–587; the sequence is GIDR.

This sequence belongs to the class-II aminoacyl-tRNA synthetase family. Requires Ca(2+) as cofactor.

The protein localises to the cytoplasm. It localises to the cytosol. The enzyme catalyses tRNA(Lys) + L-lysine + ATP = L-lysyl-tRNA(Lys) + AMP + diphosphate. Its function is as follows. Catalyzes the specific attachment of an amino acid to its cognate tRNA in a 2 step reaction: the amino acid (AA) is first activated by ATP to form AA-AMP and then transferred to the acceptor end of the tRNA. Promotes aminoacylation of non-cognate tRNAs and translational recoding of lysine at nonsense codons. The polypeptide is Lysine--tRNA ligase, cytoplasmic (Arabidopsis thaliana (Mouse-ear cress)).